A 72-amino-acid polypeptide reads, in one-letter code: UPF0352 protein Shal_2512 (72 aa).

Belongs to the UPF0352 family.

The polypeptide is UPF0352 protein Shal_2512 (Shewanella halifaxensis (strain HAW-EB4)).